The primary structure comprises 178 residues: Large ribosomal subunit protein uL6 (178 aa).

This sequence belongs to the universal ribosomal protein uL6 family. In terms of assembly, part of the 50S ribosomal subunit.

Its function is as follows. This protein binds to the 23S rRNA, and is important in its secondary structure. It is located near the subunit interface in the base of the L7/L12 stalk, and near the tRNA binding site of the peptidyltransferase center. The polypeptide is Large ribosomal subunit protein uL6 (Francisella tularensis subsp. holarctica (strain FTNF002-00 / FTA)).